The primary structure comprises 249 residues: Adenosylcobinamide-GDP ribazoletransferase (249 aa).

7 helical membrane passes run 29–49, 50–70, 104–124, 131–151, 165–185, 194–214, and 226–246; these read LYWF…CAWL, PLSI…GFIV, VGSF…VAIL, AFAL…LLAA, GFVG…SLMM, PFLL…IGFL, and VLGA…GVAF.

It belongs to the CobS family. The cofactor is Mg(2+).

It localises to the cell inner membrane. The enzyme catalyses alpha-ribazole + adenosylcob(III)inamide-GDP = adenosylcob(III)alamin + GMP + H(+). It catalyses the reaction alpha-ribazole 5'-phosphate + adenosylcob(III)inamide-GDP = adenosylcob(III)alamin 5'-phosphate + GMP + H(+). It functions in the pathway cofactor biosynthesis; adenosylcobalamin biosynthesis; adenosylcobalamin from cob(II)yrinate a,c-diamide: step 7/7. In terms of biological role, joins adenosylcobinamide-GDP and alpha-ribazole to generate adenosylcobalamin (Ado-cobalamin). Also synthesizes adenosylcobalamin 5'-phosphate from adenosylcobinamide-GDP and alpha-ribazole 5'-phosphate. In Chlorobium phaeovibrioides (strain DSM 265 / 1930) (Prosthecochloris vibrioformis (strain DSM 265)), this protein is Adenosylcobinamide-GDP ribazoletransferase.